The chain runs to 660 residues: Acetyl-coenzyme A synthetase (660 aa).

Residues R197 to K200 and T317 contribute to the CoA site. ATP is bound by residues G397–P399, D421–T426, D512, and R528. S536 contributes to the CoA binding site. R539 lines the ATP pocket. V550, H552, and V555 together coordinate Mg(2+). K625 is modified (N6-acetyllysine).

The protein belongs to the ATP-dependent AMP-binding enzyme family. The cofactor is Mg(2+). In terms of processing, acetylated. Deacetylation by the SIR2-homolog deacetylase activates the enzyme.

It catalyses the reaction acetate + ATP + CoA = acetyl-CoA + AMP + diphosphate. Functionally, catalyzes the conversion of acetate into acetyl-CoA (AcCoA), an essential intermediate at the junction of anabolic and catabolic pathways. AcsA undergoes a two-step reaction. In the first half reaction, AcsA combines acetate with ATP to form acetyl-adenylate (AcAMP) intermediate. In the second half reaction, it can then transfer the acetyl group from AcAMP to the sulfhydryl group of CoA, forming the product AcCoA. In Burkholderia mallei (strain NCTC 10247), this protein is Acetyl-coenzyme A synthetase.